The primary structure comprises 228 residues: 2-C-methyl-D-erythritol 4-phosphate cytidylyltransferase (228 aa).

This sequence belongs to the IspD/TarI cytidylyltransferase family. IspD subfamily.

The enzyme catalyses 2-C-methyl-D-erythritol 4-phosphate + CTP + H(+) = 4-CDP-2-C-methyl-D-erythritol + diphosphate. Its pathway is isoprenoid biosynthesis; isopentenyl diphosphate biosynthesis via DXP pathway; isopentenyl diphosphate from 1-deoxy-D-xylulose 5-phosphate: step 2/6. Functionally, catalyzes the formation of 4-diphosphocytidyl-2-C-methyl-D-erythritol from CTP and 2-C-methyl-D-erythritol 4-phosphate (MEP). The chain is 2-C-methyl-D-erythritol 4-phosphate cytidylyltransferase from Geobacillus thermodenitrificans (strain NG80-2).